We begin with the raw amino-acid sequence, 351 residues long: UDP-N-acetylglucosamine transporter slc35b4 (351 aa).

10 helical membrane passes run 6–26 (LISLIPISMIMVGCCSNVISL), 37–57 (AILVTFFQFATVAFISFFVNI), 77–97 (IPLKTYFLMVSIFFILSVLNN), 104–124 (IPIPFHMIFRSSSLLSTIVIG), 136–156 (QILSLIMVTLGIIFATFSSMP), 173–193 (FSIGMLMLIAAMFLSSILGLI), 209–229 (TIFYSHLFSLPFFLLFKDDIL), 252–274 (TLWVYLIVNVLTQYVCIQGVFIL), 282–302 (TCTLVISIRKFLSIIISVIYF), and 306–326 (FTSLLFTGTILVFLGTFMYST).

Belongs to the nucleotide-sugar transporter family. SLC35B subfamily.

It localises to the golgi apparatus membrane. Functionally, sugar transporter that specifically mediates the transport of UDP-N-acetylglucosamine (UDP-GlcNAc) from cytosol into Golgi. This Dictyostelium discoideum (Social amoeba) protein is UDP-N-acetylglucosamine transporter slc35b4 (slc35b4).